The following is a 513-amino-acid chain: uncharacterized protein (513 aa).

The region spanning 254–447 is the HDOD domain; that stretch reads IPQLPSKLLE…INTIRFHHNL (194 aa).

This is an uncharacterized protein from Treponema pallidum (strain Nichols).